The sequence spans 336 residues: MASVAKARSPKSTQSNSLVYDLLVLSRFTKYNPLFTIFAGGMFLFVASFPTTAFSCLLAGSTLVGNGSDVTLTWVFRQTALCLSACYSFCGAGMVWNDWIDRDIDANVARTKDRPLASGRVTTTQAMLWMVFQMAVSWWLLHFMLDGKDVNNHMLPVVIGSFLYPFGKRPICSKFYFYPQYILGFTIAWPAVPGRTAIFHGQETFAESVQACMPLLNMVFFWTIFLNTAYSYQDVVDDRKMGVNSFYNVLGKHVHLLLCLLLVPVAVCVPMYLNQFHSTWLWVSWAGVWALSLLRQITRFDEKNPASGGSLHVDNFLLGAWTVVACTIELLMRYYS.

Residues 34-54 traverse the membrane as a helical segment; the sequence is LFTIFAGGMFLFVASFPTTAF. Asparagine 66 carries an N-linked (GlcNAc...) asparagine glycan. 7 helical membrane passes run 80–100, 125–145, 181–201, 205–225, 253–273, 274–294, and 311–331; these read ALCL…NDWI, QAML…HFML, YILG…IFHG, FAES…WTIF, HVHL…PMYL, NQFH…LSLL, and LHVD…IELL.

This sequence belongs to the UbiA prenyltransferase family. Requires Mg(2+) as cofactor.

The protein resides in the membrane. The protein operates within secondary metabolite biosynthesis; terpenoid biosynthesis. Functionally, polyprenyl transferase; part of the gene cluster that mediates the biosynthesis of the diterpenoid pyrones subglutinols A and B. The first step of the pathway is the synthesis of the alpha-pyrone moiety by the polyketide synthase dpasA via condensation of one acetyl-CoA starter unit with 3 malonyl-CoA units and 2 methylations. The alpha-pyrone is then combined with geranylgeranyl pyrophosphate (GGPP) formed by the GGPP synthase dpasD through the action of the prenyltransferase dpasC to yield a linear alpha-pyrone diterpenoid. Subsequent steps in the diterpenoid pyrone biosynthetic pathway involve the decalin core formation, which is initiated by the epoxidation of the C10-C11 olefin by the FAD-dependent oxidoreductase dpasE, and is followed by a cyclization cascade catalyzed by the terpene cyclase dpasB. The FAD-linked oxidoreductase dpasF is then involved in tetrahydrofuran (THF) ring formation at the C5 unit to complete the formation of subglutinols A and B. DpasF possesses also an additional catalytic ability of multi-step oxidations to generate a new DDP analog with an enone system at the C5 named FDDP A. This is Polyprenyl transferase dpasC from Apiospora sacchari (Arthrinium sacchari).